Reading from the N-terminus, the 395-residue chain is General transcription factor IIH subunit 2 (395 aa).

One can recognise a VWFA domain in the interval 60–236 (HLYVVVDGSR…HYKELLTHHV (177 aa)). Position 95 is a phosphotyrosine (Tyr-95). The segment at 291–308 (CPQCRAKYCELPVECKIC) adopts a C4-type zinc-finger fold.

This sequence belongs to the GTF2H2 family. In terms of assembly, component of the TFIID-containing RNA polymerase II pre-initiation complex that is composed of TBP and at least GTF2A1, GTF2A2, GTF2E1, GTF2E2, GTF2F1, GTF2H2, GTF2H3, GTF2H4, GTF2H5, GTF2B, TCEA1, ERCC2 and ERCC3. Component of the 7-subunit TFIIH core complex composed of XPB/ERCC3, XPD/ERCC2, GTF2H1, GTF2H2, GTF2H3, GTF2H4 and GTF2H5, which is active in NER. The core complex associates with the 3-subunit CDK-activating kinase (CAK) module composed of CCNH/cyclin H, CDK7 and MNAT1 to form the 10-subunit holoenzyme (holo-TFIIH) active in transcription. Interacts with XPB, XPD, GTF2H1 and GTF2H3.

Its subcellular location is the nucleus. In terms of biological role, component of the general transcription and DNA repair factor IIH (TFIIH) core complex, which is involved in general and transcription-coupled nucleotide excision repair (NER) of damaged DNA and, when complexed to CAK, in RNA transcription by RNA polymerase II. In NER, TFIIH acts by opening DNA around the lesion to allow the excision of the damaged oligonucleotide and its replacement by a new DNA fragment. In transcription, TFIIH has an essential role in transcription initiation. When the pre-initiation complex (PIC) has been established, TFIIH is required for promoter opening and promoter escape. Phosphorylation of the C-terminal tail (CTD) of the largest subunit of RNA polymerase II by the kinase module CAK controls the initiation of transcription. The N-terminus of GTF2H2 interacts with and regulates XPD whereas an intact C-terminus is required for a successful escape of RNAP II form the promoter. The chain is General transcription factor IIH subunit 2 (GTF2H2) from Bos taurus (Bovine).